Here is a 260-residue protein sequence, read N- to C-terminus: Ribosomal RNA small subunit methyltransferase G (260 aa).

The tract at residues 1-45 (MKQRGPAGGRSSSPKPSAPGSGAGEGPDGRSAPASQKINKASAND) is disordered. Over residues 9 to 20 (GRSSSPKPSAPG) the composition is skewed to low complexity. Residues 33-45 (PASQKINKASAND) show a composition bias toward polar residues. S-adenosyl-L-methionine-binding residues include Gly123, Phe128, and Arg193.

Belongs to the methyltransferase superfamily. RNA methyltransferase RsmG family.

The protein localises to the cytoplasm. It catalyses the reaction guanosine(527) in 16S rRNA + S-adenosyl-L-methionine = N(7)-methylguanosine(527) in 16S rRNA + S-adenosyl-L-homocysteine. Functionally, specifically methylates the N7 position of guanine in position 527 of 16S rRNA. The protein is Ribosomal RNA small subunit methyltransferase G of Bradyrhizobium diazoefficiens (strain JCM 10833 / BCRC 13528 / IAM 13628 / NBRC 14792 / USDA 110).